The following is a 150-amino-acid chain: MPEILDKVDRRLLEELKNNARENIATLSKKLGIPRTTVHYRIKRLVEEGIIEKFTIKPNYKKLNLGTTAFILIRYDPDSGLTQREVAEQIARIPGVYEVHLVAGEWDLLLKVRASNAEEIGRIVIDKLREIRGVGQTVTMVSFVTVKEEI.

Positions 5–66 constitute an HTH asnC-type domain; sequence LDKVDRRLLE…KPNYKKLNLG (62 aa). The H-T-H motif DNA-binding region spans 24–43; that stretch reads IATLSKKLGIPRTTVHYRIK.

This is an uncharacterized protein from Pyrococcus horikoshii (strain ATCC 700860 / DSM 12428 / JCM 9974 / NBRC 100139 / OT-3).